Consider the following 339-residue polypeptide: Probable geranylgeranyl transferase type-2 subunit beta (339 aa).

6 PFTB repeats span residues 24–65 (IDKH…YLLK), 72–113 (KNEV…IQYD), 120–161 (INSV…SLLK), 168–209 (CEKA…SILN), 216–257 (IDKL…SAID), and 264–306 (NDKL…SLMG). Residues 194–196 (HAG) and 236–248 (RPEK…YSWW) contribute to the geranylgeranyl diphosphate site. 3 residues coordinate Zn(2+): D242, C244, and H294.

Belongs to the protein prenyltransferase subunit beta family. Heterodimer of an alpha and a beta subunit. The cofactor is Zn(2+).

It carries out the reaction geranylgeranyl diphosphate + L-cysteinyl-[protein] = S-geranylgeranyl-L-cysteinyl-[protein] + diphosphate. In terms of biological role, catalyzes the transfer of a geranyl-geranyl moiety from geranyl-geranyl pyrophosphate to both cysteines in Rab proteins with an -XXCC, -XCXC and -CCXX C-terminal. The polypeptide is Probable geranylgeranyl transferase type-2 subunit beta (rabggtb) (Dictyostelium discoideum (Social amoeba)).